Here is a 122-residue protein sequence, read N- to C-terminus: Large ribosomal subunit protein uL14 (122 aa).

Belongs to the universal ribosomal protein uL14 family. As to quaternary structure, part of the 50S ribosomal subunit. Forms a cluster with proteins L3 and L19. In the 70S ribosome, L14 and L19 interact and together make contacts with the 16S rRNA in bridges B5 and B8.

Its function is as follows. Binds to 23S rRNA. Forms part of two intersubunit bridges in the 70S ribosome. The polypeptide is Large ribosomal subunit protein uL14 (Geobacillus thermodenitrificans (strain NG80-2)).